The chain runs to 316 residues: Ornithine carbamoyltransferase (316 aa).

Residues 57–60 (STRT), Gln-84, Arg-108, and 135–138 (HPCQ) each bind carbamoyl phosphate. L-ornithine-binding positions include Asn-166, Asp-230, and 234 to 235 (SM). Carbamoyl phosphate is bound by residues 269 to 270 (CL) and Arg-297.

It belongs to the aspartate/ornithine carbamoyltransferase superfamily. OTCase family.

The protein resides in the cytoplasm. The catalysed reaction is carbamoyl phosphate + L-ornithine = L-citrulline + phosphate + H(+). It functions in the pathway amino-acid degradation; L-arginine degradation via ADI pathway; carbamoyl phosphate from L-arginine: step 2/2. Its function is as follows. Reversibly catalyzes the transfer of the carbamoyl group from carbamoyl phosphate (CP) to the N(epsilon) atom of ornithine (ORN) to produce L-citrulline. The protein is Ornithine carbamoyltransferase of Bacillus anthracis (strain CDC 684 / NRRL 3495).